The sequence spans 1200 residues: DNA polymerase subunit gamma-1 (1200 aa).

2 disordered regions span residues 471 to 515 and 667 to 688; these read QKKT…RPSM and MDLS…SSEH. The segment covering 472–481 has biased composition (basic residues); the sequence is KKTKISKKQK. Over residues 494–512 the composition is skewed to basic and acidic residues; it reads LVEDHNEDPGPPTEKEESR.

The protein belongs to the DNA polymerase type-A family. In terms of assembly, heterotrimer composed of a catalytic subunit and a homodimer of accessory subunits. Requires Mg(2+) as cofactor.

It is found in the mitochondrion. Its subcellular location is the mitochondrion matrix. The protein resides in the mitochondrion nucleoid. The catalysed reaction is DNA(n) + a 2'-deoxyribonucleoside 5'-triphosphate = DNA(n+1) + diphosphate. Its function is as follows. Involved in the replication of mitochondrial DNA. Associates with mitochondrial DNA. The protein is DNA polymerase subunit gamma-1 (polg) of Xenopus laevis (African clawed frog).